The sequence spans 536 residues: uncharacterized protein (536 aa).

Disordered stretches follow at residues 1–76 and 204–237; these read MSFT…SPAS and NWNSSSSFTSSTSSTPISSSYSSSGTLPSKSNKS. Low complexity-rich tracts occupy residues 7–76 and 204–234; these read TSSV…SPAS and NWNSSSSFTSSTSSTPISSSYSSSGTLPSKS. A helical membrane pass occupies residues 247 to 267; it reads CSVAIPVGVVLILIGLGIFLW. Disordered stretches follow at residues 287–354 and 373–536; these read YGFN…LLGG and DASD…LNLF. Polar residues predominate over residues 290-326; that stretch reads NPNQPSNFRSPNRAPSTNNRYRGWNGSPTPAAGNNTN. A compositionally biased stretch (low complexity) spans 327–350; sequence GRPVAPRPSAGAGGANPPAASQPG. The chain crosses the membrane as a helical span at residues 351–371; sequence LLGGSSNSAGPIAAATAAGVG. The span at 403–424 shows a compositional bias: polar residues; it reads SASNEAEATMPPSNGSNFSEGL. Residues 430 to 454 are compositionally biased toward low complexity; sequence ESGPAVGAAGAAAEAAEHSGSGSDS. The span at 480–509 shows a compositional bias: polar residues; sequence SYGSRAALSSRSQSNLLSPTSTGASNQPNY. Positions 517 to 527 are enriched in low complexity; it reads SSSNVSIPRSS.

Its subcellular location is the membrane. This is an uncharacterized protein from Schizosaccharomyces pombe (strain 972 / ATCC 24843) (Fission yeast).